A 705-amino-acid chain; its full sequence is MPRQIPLEKVRNIGIMAHIDAGKTTTTERILYYTGRVHRLGEVHDGAATMDWMEQEKERGITITSAATTCFWQPRYGLLKDVRHRVNIIDTPGHVDFTVEVERSLRVLDGAVAVFCAVGGVEPQSETVWRQANKYKVPRIGYVNKMDRVGADFFNVVEMIKERLKANPVPIQIPIGQGEMFAGFIDLIRMKGIIYDKEDGTTYQEVEIPHDLENQAKTWRVNMLEAVSDIDDSLLEKYLNGEEITEEEVRRTLRVATLKTEIIPVLCGSSFKNKGVQFMLDAVVEYLPSPIDVGAVTGHSPRDEDEKIARQPDDSAPFAGLAFKITSDPYVGKLTFFRVYSGVLKSGSYVLNSITGKKERIGRLLQMHANHREDLDEVFAGDIAAAVGLKDTKTGDTLCDESKSIVLEKMVFPEPVIQIAIEPKTKADSDKLGMSLAKLAEEDPTFKVSMNEDTNQTLIAGMGELHLEIIVDRLKREFKVDANVGKPQVSYKETIRKKVEAEGKFVRQSGGKGQFGLVNIIVEPSEKDKGFEFVNEIKGGSIPKEYIPAVSQGIQEAMRNGIVAGYPMIDVKVTLFDGKYHEVDSSEMAFKIAGSIGFKEGARKAGAVLLEPIMAVEVITPEEYMGDVMGDLSGRRGHIEGMHQRAGAQVIKAKVPLSAMFGYSTELRSMTQGRANYSMEFHDYSEVPASIANEIVEKSSGKVTA.

The tr-type G domain maps to 8-291 (EKVRNIGIMA…AVVEYLPSPI (284 aa)). GTP-binding positions include 17-24 (AHIDAGKT), 90-94 (DTPGH), and 144-147 (NKMD).

This sequence belongs to the TRAFAC class translation factor GTPase superfamily. Classic translation factor GTPase family. EF-G/EF-2 subfamily.

The protein localises to the cytoplasm. In terms of biological role, catalyzes the GTP-dependent ribosomal translocation step during translation elongation. During this step, the ribosome changes from the pre-translocational (PRE) to the post-translocational (POST) state as the newly formed A-site-bound peptidyl-tRNA and P-site-bound deacylated tRNA move to the P and E sites, respectively. Catalyzes the coordinated movement of the two tRNA molecules, the mRNA and conformational changes in the ribosome. This chain is Elongation factor G, found in Chloroherpeton thalassium (strain ATCC 35110 / GB-78).